We begin with the raw amino-acid sequence, 154 residues long: MPYRSTEVLSPGPGERAPLHRLTLTHEQRHLRRKLLHLENDDVVMLDLKEPVMLADGDLLVLEGGGHIEVKAAAEALYDIRARNPLHLMELAWHLGNRHLPAAVEEGRILIARDPVIRAMLEGLGATVDEVNEPFHPLHGAYHQHGHGDHYRHG.

It belongs to the UreE family.

It localises to the cytoplasm. Involved in urease metallocenter assembly. Binds nickel. Probably functions as a nickel donor during metallocenter assembly. The sequence is that of Urease accessory protein UreE from Rhizobium meliloti (strain 1021) (Ensifer meliloti).